Reading from the N-terminus, the 968-residue chain is MPFALGQRWISDTESELGLGTVVQVEGRMVTLLFPATGENRMFSRAEAPLTRVIFNPNDTVESHEGWSITVTEVVEKDQLVVYHGTHSETGETVSLRETLISHNIRFNKPQDRLFAGQIDRLDRFGIRYQCQLLRHKLASSDLLGLQGPRVGLIAHQQWIAHEVGRRYAPRVLLADEVGLGKTIEAGLIMHQQLLTGRAERILVIVPDTLRHQWLVEMLRRFNLRFSVFDEDRCVEAYADNDNPFYTEQLVICSLELLRKKKRLDQALDADWDLLVVDEAHHLEWSEDAPSRAYQVVEALSEVVPGVLLLTATPDQLGHQSHFARLRLLDPDRFYDYDAFLTEEQGYQAVAEAAEALSGEKKLNDSAINSLTELLSEKDIAPSIRLIQANEVDPEQQQAARDGLLQELLDRHGTGRVLYRNSRASVKGFPKRIFNPHPQAMPEQYVTAERVNAMMSGKKTPQAKALEALSPEKLYQAFESDSASWWKFDTRVDWLIAFLKSHRSKKVLIIASQAETALSLEEALRTREGILATVFHEGMSIIERDKAGAYFAQEDAGAQALICSEIGSEGRNFQFASHLVLFDLPLNPDLLEQRIGRLDRIGQKNDIQIHLPYLEGTAQERLMQWYHHGLNAFELTCPSGHVLFNEFAEELTQVLCEDDADAMTQLLNHTQHKYKELKQAMERGRDKLLEINSHGGARAAALIERLAQKDNDTHLVGSVIRLWDIIGVDQEDNGENTIVLRPSEHMLFPTYPGLPEDGVTVTFDRETALSRDDIAFISEEHPLVQTGLDLITGSETGTTSVAVLKNKALPAGTLFLELIYMADASAPKSSQLYRYLPPTPIRVLLDKNGNNLATKVDYNNFEKQLSAVNRHIASKLVNASQPLLHPLLAKGQEQAQQGLDALLVDARASMTSQLTAELERLEALKAVNPNIREEELEYVRNQMAELNGYLDASQLQLDAIRMVLVSHV.

A Helicase ATP-binding domain is found at 163–332 (EVGRRYAPRV…FARLRLLDPD (170 aa)). An ATP-binding site is contributed by 176 to 183 (DEVGLGKT). The DEAH box motif lies at 278-281 (DEAH). The Helicase C-terminal domain maps to 491 to 641 (RVDWLIAFLK…AFELTCPSGH (151 aa)).

Belongs to the SNF2/RAD54 helicase family. RapA subfamily. Interacts with the RNAP. Has a higher affinity for the core RNAP than for the holoenzyme. Its ATPase activity is stimulated by binding to RNAP.

In terms of biological role, transcription regulator that activates transcription by stimulating RNA polymerase (RNAP) recycling in case of stress conditions such as supercoiled DNA or high salt concentrations. Probably acts by releasing the RNAP, when it is trapped or immobilized on tightly supercoiled DNA. Does not activate transcription on linear DNA. Probably not involved in DNA repair. The protein is RNA polymerase-associated protein RapA of Shewanella denitrificans (strain OS217 / ATCC BAA-1090 / DSM 15013).